A 274-amino-acid chain; its full sequence is Ribulose-phosphate 3-epimerase, chloroplastic (274 aa).

The transit peptide at 1–39 directs the protein to the chloroplast; that stretch reads MASPSSSSSLCSTFASPRAASLGRRLAFSSPRKAFRVRA. Serine 56 is a binding site for substrate. A divalent metal cation contacts are provided by histidine 81, aspartate 83, and histidine 114. Aspartate 83 functions as the Proton acceptor in the catalytic mechanism. Residues histidine 114, 192-195, 225-227, and 247-248 each bind substrate; these read GFGG, DGG, and GS. A divalent metal cation is bound at residue aspartate 225. Aspartate 225 (proton donor) is an active-site residue.

This sequence belongs to the ribulose-phosphate 3-epimerase family. As to quaternary structure, homooctamer. Requires Co(2+) as cofactor. Fe(2+) is required as a cofactor. It depends on Mn(2+) as a cofactor. Zn(2+) serves as cofactor.

The protein resides in the plastid. It is found in the chloroplast thylakoid membrane. The catalysed reaction is D-ribulose 5-phosphate = D-xylulose 5-phosphate. The protein operates within carbohydrate biosynthesis; Calvin cycle. In terms of biological role, catalyzes the reversible epimerization of D-ribulose 5-phosphate to D-xylulose 5-phosphate. The chain is Ribulose-phosphate 3-epimerase, chloroplastic (RPE) from Oryza sativa subsp. japonica (Rice).